The sequence spans 132 residues: NADH-quinone oxidoreductase subunit I 1 (132 aa).

4Fe-4S ferredoxin-type domains are found at residues 42 to 71 (LKVSHDKAKCVACYLCPTVCPAKCITVEAG) and 81 to 110 (ERYEIDMLRCIFCGYCVEACPVDALKMTGQ). Residues cysteine 51, cysteine 54, cysteine 57, cysteine 61, cysteine 90, cysteine 93, cysteine 96, and cysteine 100 each coordinate [4Fe-4S] cluster.

Belongs to the complex I 23 kDa subunit family. In terms of assembly, NDH-1 is composed of 14 different subunits. Subunits NuoA, H, J, K, L, M, N constitute the membrane sector of the complex. [4Fe-4S] cluster serves as cofactor.

The protein resides in the cell inner membrane. It carries out the reaction a quinone + NADH + 5 H(+)(in) = a quinol + NAD(+) + 4 H(+)(out). Functionally, NDH-1 shuttles electrons from NADH, via FMN and iron-sulfur (Fe-S) centers, to quinones in the respiratory chain. The immediate electron acceptor for the enzyme in this species is believed to be ubiquinone. Couples the redox reaction to proton translocation (for every two electrons transferred, four hydrogen ions are translocated across the cytoplasmic membrane), and thus conserves the redox energy in a proton gradient. The chain is NADH-quinone oxidoreductase subunit I 1 from Geobacter sulfurreducens (strain ATCC 51573 / DSM 12127 / PCA).